Consider the following 186-residue polypeptide: Elongation factor P (186 aa).

It belongs to the elongation factor P family.

It is found in the cytoplasm. It participates in protein biosynthesis; polypeptide chain elongation. In terms of biological role, involved in peptide bond synthesis. Stimulates efficient translation and peptide-bond synthesis on native or reconstituted 70S ribosomes in vitro. Probably functions indirectly by altering the affinity of the ribosome for aminoacyl-tRNA, thus increasing their reactivity as acceptors for peptidyl transferase. The chain is Elongation factor P from Cupriavidus necator (strain ATCC 17699 / DSM 428 / KCTC 22496 / NCIMB 10442 / H16 / Stanier 337) (Ralstonia eutropha).